A 259-amino-acid chain; its full sequence is (3R)-3-hydroxyacyl-CoA dehydrogenase (259 aa).

NAD(+) is bound by residues 13–21 (LVTGAGSGI) and 40–41 (DL). A Phosphoserine modification is found at S58. 72-74 (ADV) is an NAD(+) binding site. S154 is a substrate binding site. N6-succinyllysine is present on K158. Y167 functions as the Proton acceptor in the catalytic mechanism. NAD(+)-binding positions include 167–171 (YAASK) and 200–202 (ITT). The residue at position 171 (K171) is an N6-succinyllysine.

It belongs to the short-chain dehydrogenases/reductases (SDR) family. As to quaternary structure, heterotetramer with CBR4; contains two molecules of HSD17B8 and CBR4.

The protein resides in the mitochondrion matrix. The catalysed reaction is a (3R)-3-hydroxyacyl-CoA + NAD(+) = a 3-oxoacyl-CoA + NADH + H(+). It carries out the reaction 17beta-estradiol + NAD(+) = estrone + NADH + H(+). The enzyme catalyses testosterone + NAD(+) = androst-4-ene-3,17-dione + NADH + H(+). It catalyses the reaction 17beta-hydroxy-5alpha-androstan-3-one + NAD(+) = 5alpha-androstan-3,17-dione + NADH + H(+). It functions in the pathway steroid biosynthesis; estrogen biosynthesis. The protein operates within lipid metabolism; fatty acid biosynthesis. It participates in lipid metabolism; mitochondrial fatty acid beta-oxidation. Its function is as follows. Required for the solubility and assembly of the heterotetramer 3-ketoacyl-[acyl carrier protein] (ACP) reductase functional complex (KAR or KAR1) that forms part of the mitochondrial fatty acid synthase (mtFAS). Alpha-subunit of the KAR complex that acts as scaffold protein required for the stability of carbonyl reductase type-4 (CBR4, beta-subunit of the KAR complex) and for its 3-ketoacyl-ACP reductase activity, thereby participating in mitochondrial fatty acid biosynthesis. Catalyzes the NAD-dependent conversion of (3R)-3-hydroxyacyl-CoA into 3-ketoacyl-CoA (3-oxoacyl-CoA) with no chain length preference; this enzymatic activity is not needed for the KAR function. Prefers (3R)-3-hydroxyacyl-CoA over (3S)-3-hydroxyacyl-CoA and displays enzymatic activity only in the presence of NAD(+). Cooperates with enoyl-CoA hydratase 1 in mitochondria, together they constitute an alternative route to the auxiliary enzyme pathways for the breakdown of Z-PUFA (cis polyunsaturated fatty acid) enoyl-esters. NAD-dependent 17-beta-hydroxysteroid dehydrogenase with highest activity towards estradiol (17beta-estradiol or E2). Has very low activity towards testosterone and dihydrotestosterone (17beta-hydroxy-5alpha-androstan-3-one). Primarily an oxidative enzyme, it can switch to a reductive mode determined in the appropriate physiologic milieu and catalyze the reduction of estrone (E1) to form biologically active 17beta-estradiol. The polypeptide is (3R)-3-hydroxyacyl-CoA dehydrogenase (HSD17B8) (Canis lupus familiaris (Dog)).